We begin with the raw amino-acid sequence, 100 residues long: Urease subunit gamma (100 aa).

It belongs to the urease gamma subunit family. As to quaternary structure, heterotrimer of UreA (gamma), UreB (beta) and UreC (alpha) subunits. Three heterotrimers associate to form the active enzyme.

It localises to the cytoplasm. It carries out the reaction urea + 2 H2O + H(+) = hydrogencarbonate + 2 NH4(+). Its pathway is nitrogen metabolism; urea degradation; CO(2) and NH(3) from urea (urease route): step 1/1. The protein is Urease subunit gamma of Prochlorococcus marinus (strain AS9601).